Here is a 187-residue protein sequence, read N- to C-terminus: Elongation factor P (187 aa).

This sequence belongs to the elongation factor P family.

The protein resides in the cytoplasm. The protein operates within protein biosynthesis; polypeptide chain elongation. Its function is as follows. Involved in peptide bond synthesis. Stimulates efficient translation and peptide-bond synthesis on native or reconstituted 70S ribosomes in vitro. Probably functions indirectly by altering the affinity of the ribosome for aminoacyl-tRNA, thus increasing their reactivity as acceptors for peptidyl transferase. This is Elongation factor P from Gloeobacter violaceus (strain ATCC 29082 / PCC 7421).